The primary structure comprises 555 residues: E3 ubiquitin-protein ligase NEURL1B (555 aa).

An NHR 1 domain is found at 38-194 (APRFHAQAKG…ITDEVQLLES (157 aa)). Threonine 199 carries the phosphothreonine modification. In terms of domain architecture, NHR 2 spans 279–433 (DLRFHATRGP…GVAGQLRLLG (155 aa)). Residues 436-493 (QSSPATTTPSGSLSGSQDDSDSDMTFSVNQSSSASESSLVTAPSSPLSPPVSPVFSPP) are disordered. Positions 462–480 (SVNQSSSASESSLVTAPSS) are enriched in low complexity. Positions 481–493 (PLSPPVSPVFSPP) are enriched in pro residues. The RING-type zinc finger occupies 503–543 (CTVCFDGEVDTVIYTCGHMCLCHSCGLRLKRQARACCPICR).

Interacts with JAG1, DLL1 and DLL4. Highest expression in brain, prostate and small intestine. In the brain the levels are higher in fetal than in adult stage. In the adult brain the highest levels are detected in the olfactory system, cerebellar cortex, optic nerve and the frontal lobe.

It localises to the cytoplasm. It carries out the reaction S-ubiquitinyl-[E2 ubiquitin-conjugating enzyme]-L-cysteine + [acceptor protein]-L-lysine = [E2 ubiquitin-conjugating enzyme]-L-cysteine + N(6)-ubiquitinyl-[acceptor protein]-L-lysine.. Its pathway is protein modification; protein ubiquitination. In terms of biological role, E3 ubiquitin-protein ligase involved in regulation of the Notch pathway through influencing the stability and activity of several Notch ligands. In Homo sapiens (Human), this protein is E3 ubiquitin-protein ligase NEURL1B (NEURL1B).